The sequence spans 164 residues: UPF0225 protein Shewmr7_1921 (164 aa).

The protein belongs to the UPF0225 family.

In Shewanella sp. (strain MR-7), this protein is UPF0225 protein Shewmr7_1921.